We begin with the raw amino-acid sequence, 379 residues long: Cathepsin B-like cysteine proteinase 6 (379 aa).

Positions 1 to 16 (MKTLLFLSCIVVAAYC) are cleaved as a signal peptide. Positions 17 to 104 (ACNDNLESVL…LSKTKDLDLD (88 aa)) are excised as a propeptide. 6 disulfide bridges follow: Cys-118–Cys-147, Cys-130–Cys-174, Cys-166–Cys-233, Cys-167–Cys-170, Cys-203–Cys-237, and Cys-211–Cys-223. Cys-133 is a catalytic residue. Asn-196 carries an N-linked (GlcNAc...) asparagine glycan. A glycan (N-linked (GlcNAc...) asparagine; atypical) is linked at Asn-201. Residues His-305 and Asn-325 contribute to the active site.

Belongs to the peptidase C1 family.

This chain is Cathepsin B-like cysteine proteinase 6 (cpr-6), found in Caenorhabditis elegans.